We begin with the raw amino-acid sequence, 371 residues long: Histidinol-phosphate aminotransferase (371 aa).

K232 is modified (N6-(pyridoxal phosphate)lysine).

The protein belongs to the class-II pyridoxal-phosphate-dependent aminotransferase family. Histidinol-phosphate aminotransferase subfamily. Homodimer. Pyridoxal 5'-phosphate is required as a cofactor.

It carries out the reaction L-histidinol phosphate + 2-oxoglutarate = 3-(imidazol-4-yl)-2-oxopropyl phosphate + L-glutamate. It functions in the pathway amino-acid biosynthesis; L-histidine biosynthesis; L-histidine from 5-phospho-alpha-D-ribose 1-diphosphate: step 7/9. The sequence is that of Histidinol-phosphate aminotransferase from Methylibium petroleiphilum (strain ATCC BAA-1232 / LMG 22953 / PM1).